Consider the following 289-residue polypeptide: S-methyl-5'-thioadenosine phosphorylase (289 aa).

Phosphate is bound by residues Ser24, 66-67 (RH), and 99-100 (TA). Met202 contacts substrate. Thr203 serves as a coordination point for phosphate. 226-228 (DYD) contacts substrate.

The protein belongs to the PNP/MTAP phosphorylase family. MTAP subfamily. In terms of assembly, homotrimer.

Its subcellular location is the cytoplasm. The protein resides in the nucleus. It carries out the reaction S-methyl-5'-thioadenosine + phosphate = 5-(methylsulfanyl)-alpha-D-ribose 1-phosphate + adenine. The protein operates within amino-acid biosynthesis; L-methionine biosynthesis via salvage pathway; S-methyl-5-thio-alpha-D-ribose 1-phosphate from S-methyl-5'-thioadenosine (phosphorylase route): step 1/1. Catalyzes the reversible phosphorylation of S-methyl-5'-thioadenosine (MTA) to adenine and 5-methylthioribose-1-phosphate. Involved in the breakdown of MTA, a major by-product of polyamine biosynthesis. Responsible for the first step in the methionine salvage pathway after MTA has been generated from S-adenosylmethionine. Has broad substrate specificity with 6-aminopurine nucleosides as preferred substrates. This Drosophila pseudoobscura pseudoobscura (Fruit fly) protein is S-methyl-5'-thioadenosine phosphorylase.